A 129-amino-acid polypeptide reads, in one-letter code: Small ribosomal subunit protein uS8 (129 aa).

Belongs to the universal ribosomal protein uS8 family. As to quaternary structure, part of the 30S ribosomal subunit.

Functionally, one of the primary rRNA binding proteins, it binds directly to 16S rRNA central domain where it helps coordinate assembly of the platform of the 30S subunit. This chain is Small ribosomal subunit protein uS8, found in Methanothrix thermoacetophila (strain DSM 6194 / JCM 14653 / NBRC 101360 / PT) (Methanosaeta thermophila).